Consider the following 553-residue polypeptide: Methionine--tRNA ligase (553 aa).

The short motif at 12–22 (PYANSQLHLGH) is the 'HIGH' region element. Zn(2+) is bound by residues cysteine 144, cysteine 147, cysteine 157, and cysteine 160. The 'KMSKS' region signature appears at 332–336 (KFSKS). Lysine 335 contributes to the ATP binding site.

Belongs to the class-I aminoacyl-tRNA synthetase family. MetG type 1 subfamily. In terms of assembly, monomer. Requires Zn(2+) as cofactor.

It localises to the cytoplasm. The catalysed reaction is tRNA(Met) + L-methionine + ATP = L-methionyl-tRNA(Met) + AMP + diphosphate. Is required not only for elongation of protein synthesis but also for the initiation of all mRNA translation through initiator tRNA(fMet) aminoacylation. The sequence is that of Methionine--tRNA ligase from Dehalococcoides mccartyi (strain ATCC BAA-2100 / JCM 16839 / KCTC 5957 / BAV1).